Here is a 490-residue protein sequence, read N- to C-terminus: MRINPTTSGSEVSAVEKKNLGRIVKIIGPVLDVAFPPGKMPNIYNALVVQGRDNEQTNVTCEVQQLLGNNRVRAVAMSDTDGLMRGMEVIDTRAPISVPVGGSTLGRIFNVLGQPVDNLGPVDTNTTSPIHRSAPAFIQLDTKLSIFETGIKVVDLLAPYRRGGKIGLFGGAGVGKTVLIMELINNIAKAHGGVSVFGGVGERTREGNDLYLEMKESGVINEENIAESKVALVYGQMNEPPGARMRVGLTALTMAEYFRDVNEQDVLLFIDNIFRFVQAGSEVSALLGRMPSAVGYQPTLSTEMGSLQERITSTKEGSITSIQAVYVPADDLTDPAPATTFAHLDATTVLSRGLAAKGIYPAVDPLDSTSTMLQPRIVGEEHYETAQRVKQTLQRYKELQDIIAILGLDELSEEDRLTVARARKIERFLSQPFFVAEVFTGSPGKYVGLAETIRGFQLILSGELDGLPEQAFYLVGNIDEATAKAMNLKT.

170-177 (GGAGVGKT) serves as a coordination point for ATP.

The protein belongs to the ATPase alpha/beta chains family. F-type ATPases have 2 components, CF(1) - the catalytic core - and CF(0) - the membrane proton channel. CF(1) has five subunits: alpha(3), beta(3), gamma(1), delta(1), epsilon(1). CF(0) has four main subunits: a(1), b(1), b'(1) and c(9-12).

It localises to the plastid. The protein localises to the chloroplast thylakoid membrane. The enzyme catalyses ATP + H2O + 4 H(+)(in) = ADP + phosphate + 5 H(+)(out). Produces ATP from ADP in the presence of a proton gradient across the membrane. The catalytic sites are hosted primarily by the beta subunits. This Ipomoea obscura (Obscure morning glory) protein is ATP synthase subunit beta, chloroplastic.